The chain runs to 262 residues: 5'-nucleotidase SurE (262 aa).

A divalent metal cation-binding residues include Asp8, Asp9, Ser41, and Asn97.

Belongs to the SurE nucleotidase family. A divalent metal cation serves as cofactor.

It localises to the cytoplasm. It carries out the reaction a ribonucleoside 5'-phosphate + H2O = a ribonucleoside + phosphate. In terms of biological role, nucleotidase that shows phosphatase activity on nucleoside 5'-monophosphates. This chain is 5'-nucleotidase SurE, found in Methanococcus maripaludis (strain DSM 14266 / JCM 13030 / NBRC 101832 / S2 / LL).